Reading from the N-terminus, the 227-residue chain is A-type potassium channel modulatory protein KCNIP1 (227 aa).

The region spanning 38 to 94 (LEMTMVCHRPEGLEQLEAQTNFTKRELQVLYRGFKNECPSGVVNEETFKQIYAQFFP) is the EF-hand 1; degenerate domain. 3 EF-hand domains span residues 97-132 (DAST…LLRG), 133-168 (TVHE…IYDM), and 181-216 (TPRQ…DDNI). 9 residues coordinate Ca(2+): Asp-146, Asn-148, Asp-150, Tyr-152, Glu-157, Asp-194, Asn-196, Asp-198, and Glu-205. The segment at 214 to 227 (DNIMRSLQLFQNVM) is interaction with KCND2.

The protein belongs to the recoverin family. Component of heteromultimeric potassium channels. Identified in potassium channel complexes containing KCND1, KCND2, KCND3, KCNIP1, KCNIP2, KCNIP3, KCNIP4, DPP6 and DPP10. Part of a heterooctamer composed of the tetrameric channel and four KCNIP1 chains. Probably part of a complex consisting of KCNIP1, KCNIP2 isoform 3 and KCND2. Self-associates to form homodimers and homotetramers. Interacts with KCNIP2 isoform 3 in a calcium-dependent manner. Interacts with KCND2; this interaction mediates the capture of both the N- and C-terminus of KCND2, thus preventing KCND2 N-type inactivation and modulates the channel gating kinetics. Interacts with KCND3; each KCNIP1 monomer interacts with two adjacent KCND3 subunits, through both the N-terminal inactivation ball of a KCND3 subunit and a C-terminal helix from the adjacent KCND3 subunit, clamping them together; this interaction stabilizes the tetrameric form and modulates the channel gating kinetics namely channel activation and inactivation kinetics and rate of recovery from inactivation. In terms of tissue distribution, detected in hippocampus and in the molecular layer of the dentate gyrus (at protein level). Isoform 1 and isoform 2 are predominantly expressed at equal levels in brain. Colocalizes with KCND3 in inhibitory interneurons in cortex and hippocampus and in striatal interneurons.

It is found in the cell membrane. It localises to the cytoplasm. The protein resides in the cell projection. Its subcellular location is the dendrite. Functionally, regulatory subunit of Kv4/D (Shal)-type voltage-gated rapidly inactivating A-type potassium channels. Regulates channel density, inactivation kinetics and rate of recovery from inactivation in a calcium-dependent and isoform-specific manner. Modulates KCND2/Kv4.2 currents. In vitro, modulates KCND1/Kv4.1 currents. Increases the presence of KCND2 at the cell surface. This Rattus norvegicus (Rat) protein is A-type potassium channel modulatory protein KCNIP1.